A 403-amino-acid chain; its full sequence is Chaperone protein DnaJ (403 aa).

The 66-residue stretch at 4 to 69 folds into the J domain; sequence DYYEILGVAR…DKRRRYDQFG (66 aa). The CR-type zinc-finger motif lies at 159-240; the sequence is GVEKTIKIKK…CYGEGIKQGE (82 aa). Zn(2+) is bound by residues Cys-172, Cys-175, Cys-188, Cys-191, Cys-214, Cys-217, Cys-228, and Cys-231. CXXCXGXG motif repeat units follow at residues 172 to 179, 188 to 195, 214 to 221, and 228 to 235; these read CRECNGTG, CPTCHGSG, CPTCGGEG, and CPSCYGEG.

The protein belongs to the DnaJ family. As to quaternary structure, homodimer. Zn(2+) is required as a cofactor.

The protein localises to the cytoplasm. Functionally, participates actively in the response to hyperosmotic and heat shock by preventing the aggregation of stress-denatured proteins and by disaggregating proteins, also in an autonomous, DnaK-independent fashion. Unfolded proteins bind initially to DnaJ; upon interaction with the DnaJ-bound protein, DnaK hydrolyzes its bound ATP, resulting in the formation of a stable complex. GrpE releases ADP from DnaK; ATP binding to DnaK triggers the release of the substrate protein, thus completing the reaction cycle. Several rounds of ATP-dependent interactions between DnaJ, DnaK and GrpE are required for fully efficient folding. Also involved, together with DnaK and GrpE, in the DNA replication of plasmids through activation of initiation proteins. The sequence is that of Chaperone protein DnaJ from Chlorobaculum tepidum (strain ATCC 49652 / DSM 12025 / NBRC 103806 / TLS) (Chlorobium tepidum).